The chain runs to 199 residues: dITP/XTP pyrophosphatase (199 aa).

Substrate is bound at residue 8–13; that stretch reads SGNAGK. Residue Asp-69 is the Proton acceptor of the active site. Asp-69 contacts Mg(2+). Substrate-binding positions include Ser-70, 154–157, Lys-177, and 182–183; these read FGYN and HR.

This sequence belongs to the HAM1 NTPase family. Homodimer. It depends on Mg(2+) as a cofactor.

It catalyses the reaction XTP + H2O = XMP + diphosphate + H(+). The catalysed reaction is dITP + H2O = dIMP + diphosphate + H(+). The enzyme catalyses ITP + H2O = IMP + diphosphate + H(+). In terms of biological role, pyrophosphatase that catalyzes the hydrolysis of nucleoside triphosphates to their monophosphate derivatives, with a high preference for the non-canonical purine nucleotides XTP (xanthosine triphosphate), dITP (deoxyinosine triphosphate) and ITP. Seems to function as a house-cleaning enzyme that removes non-canonical purine nucleotides from the nucleotide pool, thus preventing their incorporation into DNA/RNA and avoiding chromosomal lesions. The protein is dITP/XTP pyrophosphatase of Xylella fastidiosa (strain Temecula1 / ATCC 700964).